We begin with the raw amino-acid sequence, 236 residues long: Ubiquinone biosynthesis O-methyltransferase (236 aa).

The S-adenosyl-L-methionine site is built by Arg39, Gly59, Asp80, and Met124.

The protein belongs to the methyltransferase superfamily. UbiG/COQ3 family.

The enzyme catalyses a 3-demethylubiquinol + S-adenosyl-L-methionine = a ubiquinol + S-adenosyl-L-homocysteine + H(+). It carries out the reaction a 3-(all-trans-polyprenyl)benzene-1,2-diol + S-adenosyl-L-methionine = a 2-methoxy-6-(all-trans-polyprenyl)phenol + S-adenosyl-L-homocysteine + H(+). It participates in cofactor biosynthesis; ubiquinone biosynthesis. O-methyltransferase that catalyzes the 2 O-methylation steps in the ubiquinone biosynthetic pathway. This is Ubiquinone biosynthesis O-methyltransferase from Shewanella baltica (strain OS223).